Here is a 324-residue protein sequence, read N- to C-terminus: Beta-ketoacyl-[acyl-carrier-protein] synthase III (324 aa).

Active-site residues include Cys114 and His251. Positions 252 to 256 (QANKR) are ACP-binding. Residue Asn281 is part of the active site.

It belongs to the thiolase-like superfamily. FabH family. As to quaternary structure, homodimer.

The protein localises to the cytoplasm. The catalysed reaction is malonyl-[ACP] + acetyl-CoA + H(+) = 3-oxobutanoyl-[ACP] + CO2 + CoA. Its pathway is lipid metabolism; fatty acid biosynthesis. Functionally, catalyzes the condensation reaction of fatty acid synthesis by the addition to an acyl acceptor of two carbons from malonyl-ACP. Catalyzes the first condensation reaction which initiates fatty acid synthesis and may therefore play a role in governing the total rate of fatty acid production. Possesses both acetoacetyl-ACP synthase and acetyl transacylase activities. Its substrate specificity determines the biosynthesis of branched-chain and/or straight-chain of fatty acids. The protein is Beta-ketoacyl-[acyl-carrier-protein] synthase III of Bradyrhizobium sp. (strain BTAi1 / ATCC BAA-1182).